Reading from the N-terminus, the 212-residue chain is Dephospho-CoA kinase (212 aa).

In terms of domain architecture, DPCK spans 3–207 (IIGLTGGIAS…RHLADDPEPG (205 aa)). Residue 11-16 (ASGKST) participates in ATP binding.

The protein belongs to the CoaE family.

It is found in the cytoplasm. The enzyme catalyses 3'-dephospho-CoA + ATP = ADP + CoA + H(+). It participates in cofactor biosynthesis; coenzyme A biosynthesis; CoA from (R)-pantothenate: step 5/5. Functionally, catalyzes the phosphorylation of the 3'-hydroxyl group of dephosphocoenzyme A to form coenzyme A. The sequence is that of Dephospho-CoA kinase from Moorella thermoacetica (strain ATCC 39073 / JCM 9320).